A 486-amino-acid chain; its full sequence is Transcription enhancer factor-like protein egl-44 (486 aa).

Positions 47–57 are enriched in low complexity; it reads GTTTPTTTSGG. The disordered stretch occupies residues 47 to 87; sequence GTTTPTTTSGGQMMTLSPPAGDGPGSAGSMAPESTSSLSDL. Residues 88–164 constitute a DNA-binding region (TEA); sequence SGDAEGVWSI…QVLARKKLRD (77 aa). The segment at 165–188 is disordered; the sequence is EQAKKKGDIPSLLQQASPPGGVKS.

As to quaternary structure, interacts (via N-terminus) with egl-46 (via C-terminus); the interaction is direct; the interaction may regulate transcription. Interacts with yap-1 (via WW domain); the interaction may regulate transcription. In terms of tissue distribution, expressed in HSN neurons in embryos and in the FLP neurons from the L1 stage through to adults. Not expressed in touch cells. Also expressed in larval hypodermis, intestine, pharyngeal muscle and other neurons. In adults expression is lost from some neurons, is weaker in the hypodermis but remains in the intestine. Expressed in HOB neuron, ray neurons RnA and RnB, and the ray structural cell, Rnst; rays are male-specific genital sensilla (simple sense organs).

The protein resides in the nucleus. Transcription factor. Binds to DNA sequence motif 5'-CATNNNNAAATGCAT-3' as a heterodimer with egl-46. Represses expression of genes involved in differentiation of touch receptor neurons (TRN), probably acting as a heterodimer with egl-46, perhaps by occupying similar cis-regulatory elements as an unc-86/mec-3 heterodimer. Plays a role in cell fate specification of neurons, including the hook neuron HOB, and touch receptor neurons. Involved in male mating behavior, acting in concert with egl-46, via modulation of expression of polycystins lov-1 and pkd-2, homeodomain protein ceh-26, and neuropeptide-like protein nlp-8. Acts upstream of egl-46 to prevent touch cell differentiation in FLP neurons. Plays a role in neuron differentiation by repressing the expression of zag-1 in FLP neurons, probably acting as a heterodimer with egl-46; because zag-1 represses expression of egl-46 and egl-44, together these proteins form a bistable, negative-feedback loop that regulates the choice between neuronal fates. Also promotes HSN neuron development. In association with egl-46, regulates cell cycle exit in the neuronal Q cell lineage. Plays a role in specifying commissural dendrites of the PVD nociceptive neurons, acting in concert with egl-46. May be involved in thermal stress response downstream of yap-1. In Caenorhabditis elegans, this protein is Transcription enhancer factor-like protein egl-44 (egl-44).